Consider the following 515-residue polypeptide: Bifunctional purine biosynthesis protein PurH (515 aa).

An MGS-like domain is found at 1 to 145; the sequence is MTKRVLISVS…KNHASVTVVV (145 aa).

It belongs to the PurH family.

It carries out the reaction (6R)-10-formyltetrahydrofolate + 5-amino-1-(5-phospho-beta-D-ribosyl)imidazole-4-carboxamide = 5-formamido-1-(5-phospho-D-ribosyl)imidazole-4-carboxamide + (6S)-5,6,7,8-tetrahydrofolate. The catalysed reaction is IMP + H2O = 5-formamido-1-(5-phospho-D-ribosyl)imidazole-4-carboxamide. Its pathway is purine metabolism; IMP biosynthesis via de novo pathway; 5-formamido-1-(5-phospho-D-ribosyl)imidazole-4-carboxamide from 5-amino-1-(5-phospho-D-ribosyl)imidazole-4-carboxamide (10-formyl THF route): step 1/1. It functions in the pathway purine metabolism; IMP biosynthesis via de novo pathway; IMP from 5-formamido-1-(5-phospho-D-ribosyl)imidazole-4-carboxamide: step 1/1. The sequence is that of Bifunctional purine biosynthesis protein PurH from Streptococcus pneumoniae (strain Taiwan19F-14).